Consider the following 439-residue polypeptide: 3-phosphoshikimate 1-carboxyvinyltransferase (439 aa).

3-phosphoshikimate contacts are provided by Lys31, Ser32, and Arg36. Position 31 (Lys31) interacts with phosphoenolpyruvate. Positions 103 and 131 each coordinate phosphoenolpyruvate. The 3-phosphoshikimate site is built by Ser175, Gln177, Asp322, and Lys349. Gln177 contributes to the phosphoenolpyruvate binding site. Asp322 acts as the Proton acceptor in catalysis. The phosphoenolpyruvate site is built by Arg353 and Arg397.

This sequence belongs to the EPSP synthase family. Monomer.

The protein localises to the cytoplasm. The catalysed reaction is 3-phosphoshikimate + phosphoenolpyruvate = 5-O-(1-carboxyvinyl)-3-phosphoshikimate + phosphate. It participates in metabolic intermediate biosynthesis; chorismate biosynthesis; chorismate from D-erythrose 4-phosphate and phosphoenolpyruvate: step 6/7. Its function is as follows. Catalyzes the transfer of the enolpyruvyl moiety of phosphoenolpyruvate (PEP) to the 5-hydroxyl of shikimate-3-phosphate (S3P) to produce enolpyruvyl shikimate-3-phosphate and inorganic phosphate. This chain is 3-phosphoshikimate 1-carboxyvinyltransferase, found in Clostridium tetani (strain Massachusetts / E88).